The sequence spans 803 residues: Volume-regulated anion channel subunit LRRC8C (803 aa).

The Cytoplasmic portion of the chain corresponds to 1–22 (MIPVTEFRQFSEQQPAFRVLKP). The helical transmembrane segment at 23 to 48 (WWDVFTDYLSVAMLMIGVFGCTLQVM) threads the bilayer. Topologically, residues 49-124 (QDKIICLPKR…CYERALHWYA (76 aa)) are extracellular. 2 cysteine pairs are disulfide-bonded: C54/C308 and C115/C293. A helical membrane pass occupies residues 125–144 (KYFPYLVLIHTLVFMLCSNF). Residues 145-262 (WFKFPGSSSK…EEGDILYAMY (118 aa)) lie on the Cytoplasmic side of the membrane. The disordered stretch occupies residues 177–206 (EVSGEDSEEKDNRKNNMNRSGTIQSGPEGN). Over residues 191-206 (NNMNRSGTIQSGPEGN) the composition is skewed to polar residues. Phosphoserine is present on residues S212 and S215. Residues 263 to 284 (VRQTVLKVIKFLIIIAYNSALV) traverse the membrane as a helical segment. At 285 to 314 (SKVQFTVDCNVDIQDMTGYKNFSCNHTMAH) the chain is on the extracellular side. A helical membrane pass occupies residues 315–339 (LFSKLSFCYLCFVSIYGLTCLYTLY). Residues 340-803 (WLFYRSLREY…SDVREQMKAD (464 aa)) are Cytoplasmic-facing. 17 LRR repeats span residues 409–420 (WTPDKLRQKLQT), 421–443 (NAHNRLELPLIMLSGLPDTVFEI), 446–466 (LQSLKLEIIKNVMIPATIAQL), 467–488 (DNLQELCLHQCSVKIHSAALSF), 490–513 (KENLKVLSVKFDDMRELPPWMYGL), 515–537 (NLEELYLVGSLSHDISKNVTLES), 541–563 (LKSLKILSIKSNVSKIPQAVVDV), 566–586 (HLQKMCVHNDGTKLVMLNNLK), 588–611 (MTNLTELELVHCDLERIPHAVFSL), 613–635 (SLQELDLKENNLKSIEEIVSFQH), 637–659 (RKLTVLKLWYNSIAYIPEHIKKL), 660–682 (TSLERLFFSHNKVEVLPSHLFLC), 684–705 (KIRYLDLSYNDIRFIPPEIGVL), 706–728 (QSLQYFSITCNKVESLPDELYFC), 730–751 (KLKTLKIGKNSLSVLSPKIGNL), 752–774 (LFLSYLDIKGNHFEVLPPELGDC), and 776–799 (ALKRAGLVVEDALFETLPSDVREQ).

Belongs to the LRRC8 family. As to quaternary structure, heterohexamer; oligomerizes with other LRRC8 proteins (LRRC8A, LRRC8B, LRRC8D and/or LRRC8E) to form a heterohexamer. Homoheptamer; inactive, likely because it is not targeted to the plasma membrane in the absence of LRRC8A. In vivo, the subunit composition may depend primarily on expression levels, and heterooligomeric channels containing various proportions of the different LRRC8 proteins may coexist. In terms of tissue distribution, expressed at very low levels in adipose tissue.

It localises to the cell membrane. The protein resides in the endoplasmic reticulum membrane. It catalyses the reaction chloride(in) = chloride(out). It carries out the reaction iodide(out) = iodide(in). The catalysed reaction is taurine(out) = taurine(in). The enzyme catalyses 2',3'-cGAMP(out) = 2',3'-cGAMP(in). Its function is as follows. Non-essential component of the volume-regulated anion channel (VRAC, also named VSOAC channel), an anion channel required to maintain a constant cell volume in response to extracellular or intracellular osmotic changes. The VRAC channel conducts iodide better than chloride and can also conduct organic osmolytes like taurine. Plays a redundant role in the efflux of amino acids, such as aspartate and glutamate, in response to osmotic stress. The VRAC channel also mediates transport of immunoreactive cyclic dinucleotide GMP-AMP (2'-3'-cGAMP), an immune messenger produced in response to DNA virus in the cytosol. Channel activity requires LRRC8A plus at least one other family member (LRRC8B, LRRC8C, LRRC8D or LRRC8E); channel characteristics depend on the precise subunit composition. May play a role in adipogenesis. This chain is Volume-regulated anion channel subunit LRRC8C, found in Mus musculus (Mouse).